A 381-amino-acid chain; its full sequence is Neuropeptide Y receptor type 2 (381 aa).

Residues 1 to 37 (MGPIGTEADENQTVEEIKVEPYGPGHTTPRGELAPDP) are disordered. Residues 1–52 (MGPIGTEADENQTVEEIKVEPYGPGHTTPRGELAPDPEPELIDSTKLTEVRV) lie on the Extracellular side of the membrane. An N-linked (GlcNAc...) asparagine glycan is attached at Asn11. A helical membrane pass occupies residues 53–73 (VLILAYCSIILLGVVGNSLVI). Residues 74 to 87 (HVVIKFKSMRTVTN) lie on the Cytoplasmic side of the membrane. A helical transmembrane segment spans residues 88–108 (FFIANLAVADLLVNTLCLPFT). Residues 109–125 (LTYTLMGEWKMGPVLCH) are Extracellular-facing. Residues Cys124 and Cys204 are joined by a disulfide bond. A helical membrane pass occupies residues 126 to 146 (LVPYAQGLAVQVSTVTLTVIA). Over 147-166 (LDRHRCIVYHLDSKISKQNS) the chain is Cytoplasmic. Residues 167-187 (FLIIGLAWGISALLASPLAIF) form a helical membrane-spanning segment. At 188–217 (REYSLIEIIPDFEIVACTEKWPGEEKSIYG) the chain is on the extracellular side. The helical transmembrane segment at 218–238 (TVYSLSSLLILYVLPLGIISV) threads the bilayer. Residues 239 to 269 (SYVRIWSKLKNHVSPGAANDHYHQRRQKTTK) lie on the Cytoplasmic side of the membrane. The helical transmembrane segment at 270–290 (MLVFVVVVFAVSWLPLHAFQL) threads the bilayer. The Extracellular portion of the chain corresponds to 291-305 (AVDIDSQVLDLKEYK). Residues 306–326 (LIFTVFHIIAMCSTFANPLLY) traverse the membrane as a helical segment. Residues 327 to 381 (GWMNSNYRKAFLSAFRCQQRLDAIQSEVCVTGKAKTNVEVEKNHGAADSAEATNV) are Cytoplasmic-facing. Cys343 is lipidated: S-palmitoyl cysteine.

Belongs to the G-protein coupled receptor 1 family.

Its subcellular location is the cell membrane. Functionally, receptor for neuropeptide Y and peptide YY. The chain is Neuropeptide Y receptor type 2 (NPY2R) from Cavia porcellus (Guinea pig).